The primary structure comprises 149 residues: MHCPFCTAVDTKVIDSRLVGDGSQVRRRRQCLVCHERFTTFEVAELVMPRVVKSDEIREPFDEEKLRRGMLKALEKRPVSSDDVEAAINHIKSQLRATGEREIPSKQIGNFVMEQLKKLDKVAYIRFASVYRSFEDVRDFGEEIAKLQD.

A zinc finger lies at Cys-3 to Cys-34. The 91-residue stretch at Pro-49–Asp-139 folds into the ATP-cone domain.

Belongs to the NrdR family. It depends on Zn(2+) as a cofactor.

Its function is as follows. Negatively regulates transcription of bacterial ribonucleotide reductase nrd genes and operons by binding to NrdR-boxes. This is Transcriptional repressor NrdR from Proteus mirabilis (strain HI4320).